A 351-amino-acid polypeptide reads, in one-letter code: Sulfate/thiosulfate import ATP-binding protein CysA (351 aa).

The 235-residue stretch at 3-237 folds into the ABC transporter domain; it reads ITVRNLHKRF…PRSAFVYEFL (235 aa). 35-42 serves as a coordination point for ATP; it reads GPSGCGKT.

The protein belongs to the ABC transporter superfamily. Sulfate/tungstate importer (TC 3.A.1.6) family. In terms of assembly, the complex is composed of two ATP-binding proteins (CysA), two transmembrane proteins (CysT and CysW) and a solute-binding protein (CysP).

The protein localises to the cell inner membrane. The enzyme catalyses sulfate(out) + ATP + H2O = sulfate(in) + ADP + phosphate + H(+). It carries out the reaction thiosulfate(out) + ATP + H2O = thiosulfate(in) + ADP + phosphate + H(+). In terms of biological role, part of the ABC transporter complex CysAWTP involved in sulfate/thiosulfate import. Responsible for energy coupling to the transport system. This Burkholderia pseudomallei (strain K96243) protein is Sulfate/thiosulfate import ATP-binding protein CysA.